We begin with the raw amino-acid sequence, 484 residues long: tRNA sulfurtransferase (484 aa).

The region spanning Arg-63–Gln-167 is the THUMP domain. ATP-binding positions include Leu-185 to Met-186, Lys-267, Gly-289, and Gln-298. The cysteines at positions 346 and 457 are disulfide-linked. The 79-residue stretch at Ala-405–Pro-483 folds into the Rhodanese domain. Cys-457 (cysteine persulfide intermediate) is an active-site residue.

Belongs to the ThiI family.

The protein localises to the cytoplasm. It carries out the reaction [ThiI sulfur-carrier protein]-S-sulfanyl-L-cysteine + a uridine in tRNA + 2 reduced [2Fe-2S]-[ferredoxin] + ATP + H(+) = [ThiI sulfur-carrier protein]-L-cysteine + a 4-thiouridine in tRNA + 2 oxidized [2Fe-2S]-[ferredoxin] + AMP + diphosphate. The catalysed reaction is [ThiS sulfur-carrier protein]-C-terminal Gly-Gly-AMP + S-sulfanyl-L-cysteinyl-[cysteine desulfurase] + AH2 = [ThiS sulfur-carrier protein]-C-terminal-Gly-aminoethanethioate + L-cysteinyl-[cysteine desulfurase] + A + AMP + 2 H(+). The protein operates within cofactor biosynthesis; thiamine diphosphate biosynthesis. Functionally, catalyzes the ATP-dependent transfer of a sulfur to tRNA to produce 4-thiouridine in position 8 of tRNAs, which functions as a near-UV photosensor. Also catalyzes the transfer of sulfur to the sulfur carrier protein ThiS, forming ThiS-thiocarboxylate. This is a step in the synthesis of thiazole, in the thiamine biosynthesis pathway. The sulfur is donated as persulfide by IscS. This is tRNA sulfurtransferase from Azotobacter vinelandii (strain DJ / ATCC BAA-1303).